We begin with the raw amino-acid sequence, 501 residues long: MAINAQEISALIKKQIENFQPNFDVTETGVVTYIGDGIARARGLDNAMSGELLEFSNGTFGMAQNLESNDVGIIILGDFSTIREGDEVKRTGKIMEVPVGEALIGRVVNPLGQPVDGLGDIETTGFRPVETPAPGVMQRKSVFESLQTGLKAIDALVPIGRGQRELIIGDRQTGKTSVAIDAILNQKGQDMICIYVAIGQKESTVRTQVETLRRYGALDYTIVVTASASQPSPLLFIAPYAGVAMAEEFMYNGKHVLIVYDDLSKQAVAYRELSLLLRRPPGREAYPGDVFYLHSRLLERSAKVSDDLGGGSITALPFIETQAGDISAYIATNVISITDGQIFLQEDLFNSGIRPAIDAGSSVSRVGGSAQIKAMKRVAGTLRLDLASYRELEAFTQFGSDLDAATQAKLNRGRRTVEILKQPLHKPLPVEKQVVILYALTHGFLDDVPVDDILAFEEALYDYFDAHYDHLFETIRTTKDLPQEAELDVAIQAFKAQSNFK.

An ATP-binding site is contributed by 169–176; that stretch reads GDRQTGKT.

The protein belongs to the ATPase alpha/beta chains family. In terms of assembly, F-type ATPases have 2 components, CF(1) - the catalytic core - and CF(0) - the membrane proton channel. CF(1) has five subunits: alpha(3), beta(3), gamma(1), delta(1), epsilon(1). CF(0) has three main subunits: a(1), b(2) and c(9-12). The alpha and beta chains form an alternating ring which encloses part of the gamma chain. CF(1) is attached to CF(0) by a central stalk formed by the gamma and epsilon chains, while a peripheral stalk is formed by the delta and b chains.

It localises to the cell membrane. It catalyses the reaction ATP + H2O + 4 H(+)(in) = ADP + phosphate + 5 H(+)(out). Produces ATP from ADP in the presence of a proton gradient across the membrane. The alpha chain is a regulatory subunit. The protein is ATP synthase subunit alpha of Streptococcus equi subsp. equi (strain 4047).